The chain runs to 428 residues: Palmitoyltransferase pfa4 (428 aa).

At 1-10 (MLCRSFNISQ) the chain is on the cytoplasmic side. Residues 11-31 (LAIPFVSVLISFLAYTSQLFF) traverse the membrane as a helical segment. Topologically, residues 32–43 (YYFEEAPLRSEE) are lumenal. A helical membrane pass occupies residues 44-61 (FWRLNIFAVCIWVCYYRA). Residues 62-134 (CTVDPGRIPK…SNCVSHFTYP (73 aa)) lie on the Cytoplasmic side of the membrane. In terms of domain architecture, DHHC spans 91-141 (RWCRRCEAFKPPRAHHCKTCQRCIPKMDHHCPWTSNCVSHFTYPHFMRFLF). The active-site S-palmitoyl cysteine intermediate is Cys121. The chain crosses the membrane as a helical span at residues 135-155 (HFMRFLFYAVVGMGYLETLLF). Residues 156 to 177 (ERASIVWASRHLPSYLGPGLGQ) lie on the Lumenal side of the membrane. The chain crosses the membrane as a helical span at residues 178 to 198 (LVHLFILLVVNSLTWLALFIL). Over 199-428 (LLRSIWSLAL…GILMQRRRQQ (230 aa)) the chain is Cytoplasmic. The segment at 339–400 (QRSNDASHSG…WKNSEGDRLR (62 aa)) is disordered. The span at 360–373 (DRFNENKAKERLSE) shows a compositional bias: basic and acidic residues. Over residues 374–388 (SESDFSDDEEVQDGE) the composition is skewed to acidic residues. Over residues 389–400 (EGWKNSEGDRLR) the composition is skewed to basic and acidic residues.

This sequence belongs to the DHHC palmitoyltransferase family. PFA4 subfamily.

It is found in the endoplasmic reticulum membrane. The enzyme catalyses L-cysteinyl-[protein] + hexadecanoyl-CoA = S-hexadecanoyl-L-cysteinyl-[protein] + CoA. Mediates the reversible addition of palmitate to target proteins, thereby regulating their membrane association and biological function. The sequence is that of Palmitoyltransferase pfa4 from Aspergillus fumigatus (strain ATCC MYA-4609 / CBS 101355 / FGSC A1100 / Af293) (Neosartorya fumigata).